The chain runs to 77 residues: Acyl carrier protein (77 aa).

One can recognise a Carrier domain in the interval 1–76 (MENFDKVKDI…DAVKFINSLE (76 aa)). Position 36 is an O-(pantetheine 4'-phosphoryl)serine (serine 36).

It belongs to the acyl carrier protein (ACP) family. Post-translationally, 4'-phosphopantetheine is transferred from CoA to a specific serine of apo-ACP by AcpS. This modification is essential for activity because fatty acids are bound in thioester linkage to the sulfhydryl of the prosthetic group.

It localises to the cytoplasm. It functions in the pathway lipid metabolism; fatty acid biosynthesis. In terms of biological role, carrier of the growing fatty acid chain in fatty acid biosynthesis. This is Acyl carrier protein from Staphylococcus aureus (strain Mu3 / ATCC 700698).